We begin with the raw amino-acid sequence, 408 residues long: Histidine--tRNA ligase (408 aa).

The protein belongs to the class-II aminoacyl-tRNA synthetase family.

The protein resides in the cytoplasm. The enzyme catalyses tRNA(His) + L-histidine + ATP = L-histidyl-tRNA(His) + AMP + diphosphate + H(+). In Methanospirillum hungatei JF-1 (strain ATCC 27890 / DSM 864 / NBRC 100397 / JF-1), this protein is Histidine--tRNA ligase.